Reading from the N-terminus, the 510-residue chain is D-alanine--D-alanyl carrier protein ligase (510 aa).

Position 157 to 158 (157 to 158 (TS)) interacts with ATP. Asp-202 provides a ligand contact to D-alanine. Position 297 to 302 (297 to 302 (NTYGPT)) interacts with ATP. Val-306 serves as a coordination point for D-alanine. ATP is bound by residues Asp-389 and Lys-498. Lys-498 contacts D-alanine.

Belongs to the ATP-dependent AMP-binding enzyme family. DltA subfamily.

It localises to the cytoplasm. The enzyme catalyses holo-[D-alanyl-carrier protein] + D-alanine + ATP = D-alanyl-[D-alanyl-carrier protein] + AMP + diphosphate. It functions in the pathway cell wall biogenesis; lipoteichoic acid biosynthesis. Catalyzes the first step in the D-alanylation of lipoteichoic acid (LTA), the activation of D-alanine and its transfer onto the D-alanyl carrier protein (Dcp) DltC. In an ATP-dependent two-step reaction, forms a high energy D-alanyl-AMP intermediate, followed by transfer of the D-alanyl residue as a thiol ester to the phosphopantheinyl prosthetic group of the Dcp. D-alanylation of LTA plays an important role in modulating the properties of the cell wall in Gram-positive bacteria, influencing the net charge of the cell wall. This chain is D-alanine--D-alanyl carrier protein ligase, found in Listeria monocytogenes serotype 4a (strain HCC23).